We begin with the raw amino-acid sequence, 213 residues long: Alkylbase DNA glycosidase-like protein mag2 (213 aa).

Positions 53, 54, 61, 91, 94, 96, 97, 99, 102, 137, 138, 140, 143, 163, and 164 each coordinate DNA.

The protein belongs to the alkylbase DNA glycosidase AlkA family.

It is found in the nucleus. Alkylbase DNA glycosidase-like protein that shows no DNA glycosylase activity for alkylated bases. The molecular role of mag2 appears to be abasic (AP) site recognition and protection, while possibly facilitating damage signaling by structurally sculpting the DNA substrate. Stimulates AP site binding to mismatch repair protein mutS. This is Alkylbase DNA glycosidase-like protein mag2 from Schizosaccharomyces pombe (strain 972 / ATCC 24843) (Fission yeast).